Reading from the N-terminus, the 865-residue chain is Armadillo repeat-containing protein 2 (865 aa).

Disordered stretches follow at residues 39–75 (TVRT…FSVH) and 214–243 (SVPF…DQSR). The span at 60 to 75 (SSRTPENRPPSSFSVH) shows a compositional bias: polar residues. ARM repeat units lie at residues 261–300 (IEVD…HALE), 303–343 (NMLG…ALKV), 362–402 (EKND…TIKF), 407–448 (PEFL…HLLV), 461–502 (PLAR…KLTS), 505–546 (DCCV…NLTA), 550–587 (QARE…GEGD), 589–614 (RPEA…NLAI), 617–660 (GVGP…NLSY), 662–703 (KVKN…NLSQ), 705–744 (HDIC…NLTV), and 746–788 (RDKR…NFSE).

Its function is as follows. Required for sperm flagellum axoneme organization and function. Involved in axonemal central pair complex assembly and/or stability. The sequence is that of Armadillo repeat-containing protein 2 from Bos taurus (Bovine).